We begin with the raw amino-acid sequence, 88 residues long: Putative membrane protein insertion efficiency factor (88 aa).

Belongs to the UPF0161 family.

It is found in the cell inner membrane. Could be involved in insertion of integral membrane proteins into the membrane. This chain is Putative membrane protein insertion efficiency factor, found in Coxiella burnetii (strain Dugway 5J108-111).